Consider the following 199-residue polypeptide: Phosphatidylethanolamine N-methyltransferase (199 aa).

The Lumenal segment spans residues 2-12; that stretch reads SWLLGYVDPTE. Residues 13 to 33 constitute an intramembrane region (helical); the sequence is PSFVAAVLTIVFNPLFWNVVA. At 34–45 the chain is on the lumenal side; it reads RWEQRTRKLSRA. Residues 46-66 traverse the membrane as a helical segment; the sequence is FGSPYLACYSLGSIILLLNIL. Over 67–93 the chain is Cytoplasmic; sequence RSHCFTQAMMSQPKMEGLDSHTIYFLG. Residues 94 to 114 form a helical membrane-spanning segment; that stretch reads LALLGWGLVFVLSSFYALGFT. 98–100 provides a ligand contact to S-adenosyl-L-methionine; sequence GWG. Over 115-157 the chain is Lumenal; it reads GTFLGDYFGILKESRVTTFPFSVLDNPMYWGSTANYLGWALMH. The chain crosses the membrane as a helical span at residues 158 to 178; sequence ASPTGLLLTVLVALVYVVALL. Over 179-199 the chain is Cytoplasmic; that stretch reads FEEPFTAEIYRRKATRLHKRS. An S-adenosyl-L-methionine-binding site is contributed by 180–181; sequence EE.

Belongs to the class VI-like SAM-binding methyltransferase superfamily. PEMT/PEM2 methyltransferase family. As to expression, expressed in liver (at protein level).

The protein localises to the endoplasmic reticulum membrane. Its subcellular location is the mitochondrion membrane. It carries out the reaction a 1,2-diacyl-sn-glycero-3-phosphoethanolamine + S-adenosyl-L-methionine = a 1,2-diacyl-sn-glycero-3-phospho-N-methylethanolamine + S-adenosyl-L-homocysteine + H(+). The catalysed reaction is a 1,2-diacyl-sn-glycero-3-phospho-N-methylethanolamine + S-adenosyl-L-methionine = a 1,2-diacyl-sn-glycero-3-phospho-N,N-dimethylethanolamine + S-adenosyl-L-homocysteine + H(+). It catalyses the reaction a 1,2-diacyl-sn-glycero-3-phospho-N,N-dimethylethanolamine + S-adenosyl-L-methionine = a 1,2-diacyl-sn-glycero-3-phosphocholine + S-adenosyl-L-homocysteine + H(+). The enzyme catalyses 1,2-di-(9Z-octadecenoyl)-sn-glycero-3-phosphoethanolamine + S-adenosyl-L-methionine = 1,2-di-(9Z-octadecenoyl)-sn-glycero-3-phospho-N-methylethanolamine + S-adenosyl-L-homocysteine + H(+). It carries out the reaction 1,2-di-(9Z-octadecenoyl)-sn-glycero-3-phospho-N-methylethanolamine + S-adenosyl-L-methionine = 1,2-di-(9Z-octadecenoyl)-sn-glycero-3-phospho-N,N-dimethylethanolamine + S-adenosyl-L-homocysteine + H(+). The catalysed reaction is 1,2-di-(9Z-octadecenoyl)-sn-glycero-3-phospho-N,N-dimethylethanolamine + S-adenosyl-L-methionine = 1,2-di-(9Z-octadecenoyl)-sn-glycero-3-phosphocholine + S-adenosyl-L-homocysteine + H(+). It catalyses the reaction 1,2-di-(9Z,12Z-octadecadienoyl)-sn-glycero-3-phosphoethanolamine + S-adenosyl-L-methionine = 1,2-di-(9Z,12Z-octadecadienoyl)-sn-glycero-3-phospho-N-methylethanolamine + S-adenosyl-L-homocysteine + H(+). The enzyme catalyses 1,2-di-(9Z,12Z-octadecadienoyl)-sn-glycero-3-phospho-N-methylethanolamine + S-adenosyl-L-methionine = 1,2-di-(9Z,12Z-octadecadienoyl)-sn-glycero-3-phospho-N,N-dimethylethanolamine + S-adenosyl-L-homocysteine + H(+). It carries out the reaction 1,2-di-(9Z,12Z-octadecadienoyl)-sn-glycero-3-phospho-N,N-dimethylethanolamine + S-adenosyl-L-methionine = 1,2-di-(9Z,12Z-octadecadienoyl)-sn-glycero-3-phosphocholine + S-adenosyl-L-homocysteine + H(+). The catalysed reaction is 1,2-di-(9Z,12Z,15Z-octadecatrienoyl)-sn-glycero-3-phosphoethanolamine + S-adenosyl-L-methionine = 1,2-di-(9Z,12Z,15Z-octadecatrienoyl)-sn-glycero-3-phospho-N-methylethanolamine + S-adenosyl-L-homocysteine + H(+). It catalyses the reaction 1,2-di-(9Z,12Z,15Z-octadecatrienoyl)-sn-glycero-3-phospho-N-methylethanolamine + S-adenosyl-L-methionine = 1,2-di-(9Z,12Z,15Z-octadecatrienoyl)-sn-glycero-3-phospho-N,N-dimethylethanolamine + S-adenosyl-L-homocysteine + H(+). The enzyme catalyses 1,2-di-(9Z,12Z,15Z-octadecatrienoyl)-sn-glycero-3-phospho-N,N-dimethylethanolamine + S-adenosyl-L-methionine = 1,2-di-(9Z,12Z,15Z-octadecatrienoyl)-sn-glycero-3-phosphocholine + S-adenosyl-L-homocysteine + H(+). It carries out the reaction 1-hexadecanoyl-2-(4Z,7Z,10Z,13Z,16Z,19Z-docosahexaenoyl)-sn-glycero-3-phosphoethanolamine + S-adenosyl-L-methionine = 1-hexadecanoyl-2-(4Z,7Z,10Z,13Z,16Z,19Z-docosahexaenoyl)-sn-glycero-3-phospho-N-methylethanolamine + S-adenosyl-L-homocysteine + H(+). The catalysed reaction is 1-hexadecanoyl-2-(4Z,7Z,10Z,13Z,16Z,19Z-docosahexaenoyl)-sn-glycero-3-phospho-N-methylethanolamine + S-adenosyl-L-methionine = 1-hexadecanoyl-2-(4Z,7Z,10Z,13Z,16Z,19Z-docosahexaenoyl)-sn-glycero-3-phospho-N,N-dimethylethanolamine + S-adenosyl-L-homocysteine + H(+). It catalyses the reaction 1-hexadecanoyl-2-(4Z,7Z,10Z,13Z,16Z,19Z-docosahexaenoyl)-sn-glycero-3-phospho-N,N-dimethylethanolamine + S-adenosyl-L-methionine = 1-hexadecanoyl-2-(4Z,7Z,10Z,13Z,16Z,19Z-docosahexaenoyl)-sn-glycero-3-phosphocholine + S-adenosyl-L-homocysteine + H(+). It functions in the pathway phospholipid metabolism; phosphatidylcholine biosynthesis. Its function is as follows. Catalyzes the three sequential steps of the methylation pathway for the biosynthesis of phosphatidylcholine, a critical and essential component for membrane structure. Uses S-adenosylmethionine (S-adenosyl-L-methionine, SAM or AdoMet) as the methyl group donor for the methylation of phosphatidylethanolamine (1,2-diacyl-sn-glycero-3-phosphoethanolamine, PE) to phosphatidylmonomethylethanolamine (1,2-diacyl-sn-glycero-3-phospho-N-methylethanolamine, PMME), PMME to phosphatidyldimethylethanolamine (1,2-diacyl-sn-glycero-3-phospho-N,N-dimethylethanolamine, PDME), and PDME to phosphatidylcholine (1,2-diacyl-sn-glycero-3-phosphocholine, PC), producing S-adenosyl-L-homocysteine in each step. This Rattus norvegicus (Rat) protein is Phosphatidylethanolamine N-methyltransferase.